A 248-amino-acid polypeptide reads, in one-letter code: Inner membrane protein pE248R (248 aa).

A lipid anchor (N-myristoyl glycine; by host) is attached at G2. Topologically, residues 2–199 (GGSTSKNSFK…ADAISAVFKN (198 aa)) are cytoplasmic. Residues 200-220 (IMVAAVVIVLIIVGFIAVFYF) form a helical membrane-spanning segment. Residues 221–248 (LHSRHRHEEEEEAEPLISNKVLKNAAVS) are Extracellular-facing.

This sequence belongs to the asfivirus E248R family. Interacts with A151R.

Its subcellular location is the host membrane. The protein localises to the virion membrane. Essential for viral fusion with host endosomal membrane and core release. This chain is Inner membrane protein pE248R, found in Ornithodoros (relapsing fever ticks).